The following is a 436-amino-acid chain: Repulsive guidance molecule B (436 aa).

An N-terminal signal peptide occupies residues M1–A48. N-linked (GlcNAc...) asparagine glycosylation is present at N123. Cystine bridges form between C142–C229 and C166–C315. A glycan (N-linked (GlcNAc...) asparagine) is linked at N386. The GPI-anchor amidated cysteine moiety is linked to residue C415. Positions G416–L436 are cleaved as a propeptide — removed in mature form.

This sequence belongs to the repulsive guidance molecule (RGM) family. Homooligomer. Interacts with DRGX. Interacts with BMP2 and BMP4. Interacts with the BMP type I receptors ACVR1, BMPR1A and BMPR1B and with the BMP type II receptor ACVR2B. The functional complex with its receptor NEO1/neogenin appears to be a heterotetramer with a 2:2 stoichiometry, RGM molecules acting as staples that bring two NEO1 receptors together without interacting themselves, this arrangement leads to activation of downstream signaling via RhoA. GPI-anchored. In terms of processing, autocatalytically cleaved at low pH; the two chains remain linked via two disulfide bonds. Detected in neonatal and adult dorsal root ganglion sensory neurons, spinal cord, and brain (at protein level). Also expressed at high levels in retinal ganglion cells of developing mouse, extending to the optic nerve (at protein level). Expressed in testis, epididymis, ovary, uterus, and pituitary.

The protein localises to the cell membrane. The protein resides in the membrane raft. In terms of biological role, member of the repulsive guidance molecule (RGM) family that contributes to the patterning of the developing nervous system. Acts as a bone morphogenetic protein (BMP) coreceptor that potentiates BMP signaling. Promotes neuronal adhesion. May inhibit neurite outgrowth. In Mus musculus (Mouse), this protein is Repulsive guidance molecule B.